Reading from the N-terminus, the 317-residue chain is Putative GTPase PH0274 (317 aa).

GTP is bound by residues 54-62, Asp-196, and 231-233; these read GPPGAGKST and VGT.

The protein belongs to the SIMIBI class G3E GTPase family. ArgK/MeaB subfamily.

In terms of biological role, may have GTPase activity. May also bind and hydrolyze ATP. May function as chaperone. This chain is Putative GTPase PH0274, found in Pyrococcus horikoshii (strain ATCC 700860 / DSM 12428 / JCM 9974 / NBRC 100139 / OT-3).